The sequence spans 253 residues: 5'-nucleotidase SurE (253 aa).

D8, D9, S39, and N92 together coordinate a divalent metal cation.

Belongs to the SurE nucleotidase family. A divalent metal cation is required as a cofactor.

It is found in the cytoplasm. The enzyme catalyses a ribonucleoside 5'-phosphate + H2O = a ribonucleoside + phosphate. Functionally, nucleotidase that shows phosphatase activity on nucleoside 5'-monophosphates. In Burkholderia pseudomallei (strain 668), this protein is 5'-nucleotidase SurE.